A 72-amino-acid polypeptide reads, in one-letter code: Exodeoxyribonuclease 7 small subunit (72 aa).

This sequence belongs to the XseB family. In terms of assembly, heterooligomer composed of large and small subunits.

The protein resides in the cytoplasm. The enzyme catalyses Exonucleolytic cleavage in either 5'- to 3'- or 3'- to 5'-direction to yield nucleoside 5'-phosphates.. In terms of biological role, bidirectionally degrades single-stranded DNA into large acid-insoluble oligonucleotides, which are then degraded further into small acid-soluble oligonucleotides. The chain is Exodeoxyribonuclease 7 small subunit from Chlamydia trachomatis serovar L2 (strain ATCC VR-902B / DSM 19102 / 434/Bu).